A 266-amino-acid polypeptide reads, in one-letter code: 15-hydroxyprostaglandin dehydrogenase [NAD(+)] (266 aa).

Residues 12-20 (GAAQGIGRA), 36-37 (DW), 63-65 (CDV), and Asn-91 each bind NAD(+). Positions 138 and 148 each coordinate substrate. The Proton acceptor role is filled by Tyr-151. Residues 151–155 (YCASK) and 186–188 (VNT) contribute to the NAD(+) site.

This sequence belongs to the short-chain dehydrogenases/reductases (SDR) family. As to quaternary structure, homodimer.

The protein resides in the cytoplasm. It carries out the reaction prostaglandin E2 + NAD(+) = 15-oxoprostaglandin E2 + NADH + H(+). The enzyme catalyses (15S)-hydroxy-(5Z,8Z,11Z,13E)-eicosatetraenoate + NAD(+) = 15-oxo-(5Z,8Z,11Z,13E)-eicosatetraenoate + NADH + H(+). It catalyses the reaction (11R)-hydroxy-(5Z,8Z,12E,14Z)-eicosatetraenoate + NAD(+) = 11-oxo-(5Z,8Z,12E,14Z)-eicosatetraenoate + NADH + H(+). The catalysed reaction is lipoxin A4 + NAD(+) = 15-oxo-(5S,6R)-dihydroxy-(7E,9E,11Z,13E)-eicosatetraenoate + NADH + H(+). It carries out the reaction 15-oxo-(5S,6R)-dihydroxy-(7E,9E,11Z)-eicosatrienoate + NADH + H(+) = (5S,6R,15S)-trihydroxy-(7E,9E,11Z)-eicosatrienoate + NAD(+). The enzyme catalyses prostaglandin A1 + NAD(+) = 15-oxo-prostaglandin A1 + NADH + H(+). It catalyses the reaction prostaglandin E1 + NAD(+) = 15-oxoprostaglandin E1 + NADH + H(+). The catalysed reaction is 14-hydroxy-(4Z,7Z,10Z,12E,16Z,19Z)-docosahexaenoate + NAD(+) = 14-oxo-(4Z,7Z,10Z,12E,16Z,19Z)-docosahexaenoate + NADH + H(+). It carries out the reaction resolvin E1 + NAD(+) = 18-oxo-resolvin E1 + NADH + H(+). The enzyme catalyses resolvin D1 + NAD(+) = 8-oxoresolvin D1 + NADH + H(+). It catalyses the reaction resolvin D1 + NAD(+) = 17-oxoresolvin D1 + NADH + H(+). The catalysed reaction is resolvin D2 + NAD(+) = 7-oxoresolvin D2 + NADH + H(+). It carries out the reaction resolvin D2 + NAD(+) = 16-oxoresolvin D2 + NADH + H(+). Functionally, catalyzes the NAD-dependent dehydrogenation (oxidation) of a broad array of hydroxylated polyunsaturated fatty acids (mainly eicosanoids and docosanoids, including prostaglandins, lipoxins and resolvins), yielding their corresponding keto (oxo) metabolites. Decreases the levels of the pro-proliferative prostaglandins such as prostaglandin E2 (whose activity is increased in cancer because of an increase in the expression of cyclooxygenase 2) and generates oxo-fatty acid products that can profoundly influence cell function by abrogating pro-inflammatory cytokine expression. Converts resolvins E1, D1 and D2 to their oxo products, which represents a mode of resolvin inactivation. Resolvin E1 plays important roles during the resolution phase of acute inflammation, while resolvins D1 and D2 have a unique role in obesity-induced adipose inflammation. This is 15-hydroxyprostaglandin dehydrogenase [NAD(+)] (HPGD) from Macaca fascicularis (Crab-eating macaque).